The primary structure comprises 261 residues: Carnitinyl-CoA dehydratase (261 aa).

Catalysis depends on Glu111, which acts as the Nucleophile. The active-site Proton acceptor is the Glu131.

It belongs to the enoyl-CoA hydratase/isomerase family.

It catalyses the reaction (R)-carnitinyl-CoA = crotonobetainyl-CoA + H2O. The protein operates within amine and polyamine metabolism; carnitine metabolism. Its function is as follows. Catalyzes the reversible dehydration of L-carnitinyl-CoA to crotonobetainyl-CoA. The chain is Carnitinyl-CoA dehydratase from Salmonella dublin (strain CT_02021853).